Reading from the N-terminus, the 503-residue chain is Ell-associated factor Eaf (503 aa).

Polar residues-rich tracts occupy residues 119-145 (TRNE…NQGA) and 167-186 (ENST…SRRN). Disordered stretches follow at residues 119–220 (TRNE…PAWD), 250–360 (GHAN…SQSV), and 372–503 (GGVL…DDDD). Ser196 carries the post-translational modification Phosphoserine. Residues 202–215 (SPSRPVPVHRSPQS) are compositionally biased toward low complexity. Composition is skewed to polar residues over residues 250–273 (GHAN…STHI) and 298–307 (MAQQQQQHPS). Residues 308 to 337 (NYGRGYNGGHNHAQQQQQQQRNSPPRQRPS) are compositionally biased toward low complexity. Residues 385-400 (DSSDSDSGSDSDDSTE) are compositionally biased toward acidic residues. Composition is skewed to low complexity over residues 406–437 (QGQQ…HHNQ), 454–472 (HQQQ…QKQQ), and 487–497 (LQNDLQLSSNS).

This sequence belongs to the EAF family.

It is found in the nucleus. Functionally, promotes transcriptional elongation by Su(Tpl)/ELL. Essential for development. The sequence is that of Ell-associated factor Eaf from Drosophila sechellia (Fruit fly).